The primary structure comprises 215 residues: Cytochrome b6 (215 aa).

The helical transmembrane segment at 32 to 52 (IFYCLGGITFTSFVIQVASGF) threads the bilayer. Cysteine 35 provides a ligand contact to heme c. Heme b contacts are provided by histidine 86 and histidine 100. Helical transmembrane passes span 90 to 110 (ASMM…TGGF), 116 to 136 (LTWV…VTGY), and 186 to 206 (LHTF…FLMI). Residues histidine 187 and histidine 202 each coordinate heme b.

Belongs to the cytochrome b family. PetB subfamily. In terms of assembly, the 4 large subunits of the cytochrome b6-f complex are cytochrome b6, subunit IV (17 kDa polypeptide, PetD), cytochrome f and the Rieske protein, while the 4 small subunits are PetG, PetL, PetM and PetN. The complex functions as a dimer. Heme b serves as cofactor. Requires heme c as cofactor.

It localises to the plastid. It is found in the chloroplast thylakoid membrane. Component of the cytochrome b6-f complex, which mediates electron transfer between photosystem II (PSII) and photosystem I (PSI), cyclic electron flow around PSI, and state transitions. The chain is Cytochrome b6 from Chaetosphaeridium globosum (Charophycean green alga).